A 197-amino-acid polypeptide reads, in one-letter code: dTTP/UTP pyrophosphatase (197 aa).

Aspartate 69 (proton acceptor) is an active-site residue.

The protein belongs to the Maf family. YhdE subfamily. The cofactor is a divalent metal cation.

The protein localises to the cytoplasm. The enzyme catalyses dTTP + H2O = dTMP + diphosphate + H(+). It catalyses the reaction UTP + H2O = UMP + diphosphate + H(+). In terms of biological role, nucleoside triphosphate pyrophosphatase that hydrolyzes dTTP and UTP. May have a dual role in cell division arrest and in preventing the incorporation of modified nucleotides into cellular nucleic acids. The chain is dTTP/UTP pyrophosphatase from Lachnoclostridium phytofermentans (strain ATCC 700394 / DSM 18823 / ISDg) (Clostridium phytofermentans).